Here is a 29-residue protein sequence, read N- to C-terminus: Cyclotide mech-7 (29 aa).

The cyclopeptide (Gly-Asp) cross-link spans 1–29 (GIPICGETCTIGTCNTPGCTCSWPVCTRD). 3 disulfides stabilise this stretch: cysteine 5–cysteine 19, cysteine 9–cysteine 21, and cysteine 14–cysteine 26.

In terms of processing, this is a cyclic peptide. Post-translationally, contains 3 disulfide bonds.

Functionally, probably participates in a plant defense mechanism (Potential). Binds to and induces leakage in phospholipd membranes, particularly ones containing 1-palmitoyl-2-oleophosphatidylethanolamine (POPE). This Melicytus chathamicus (Chatham Island mahoe) protein is Cyclotide mech-7.